A 481-amino-acid chain; its full sequence is Cysteine--tRNA ligase (481 aa).

Residue Cys43 coordinates Zn(2+). The short motif at 45–55 (ATVQGLPHIGH) is the 'HIGH' region element. Zn(2+)-binding residues include Cys221, His246, and Glu250. Residues 277 to 281 (KMSKS) carry the 'KMSKS' region motif. Lys280 contacts ATP.

It belongs to the class-I aminoacyl-tRNA synthetase family. As to quaternary structure, monomer. It depends on Zn(2+) as a cofactor.

It localises to the cytoplasm. It carries out the reaction tRNA(Cys) + L-cysteine + ATP = L-cysteinyl-tRNA(Cys) + AMP + diphosphate. The sequence is that of Cysteine--tRNA ligase from Mycobacterium sp. (strain JLS).